A 310-amino-acid chain; its full sequence is Methionyl-tRNA formyltransferase (310 aa).

111 to 114 lines the (6S)-5,6,7,8-tetrahydrofolate pocket; the sequence is SILP.

It belongs to the Fmt family.

The enzyme catalyses L-methionyl-tRNA(fMet) + (6R)-10-formyltetrahydrofolate = N-formyl-L-methionyl-tRNA(fMet) + (6S)-5,6,7,8-tetrahydrofolate + H(+). In terms of biological role, attaches a formyl group to the free amino group of methionyl-tRNA(fMet). The formyl group appears to play a dual role in the initiator identity of N-formylmethionyl-tRNA by promoting its recognition by IF2 and preventing the misappropriation of this tRNA by the elongation apparatus. In Methylobacterium sp. (strain 4-46), this protein is Methionyl-tRNA formyltransferase.